A 348-amino-acid chain; its full sequence is D-erythrose-4-phosphate dehydrogenase (348 aa).

Residues 12-13 and Arg-81 contribute to the NAD(+) site; that span reads RI. Residues 154 to 156, Arg-200, 213 to 214, and Arg-236 each bind substrate; these read SCT and TK. The active-site Nucleophile is the Cys-155. Asn-318 is an NAD(+) binding site.

It belongs to the glyceraldehyde-3-phosphate dehydrogenase family. Epd subfamily. In terms of assembly, homotetramer.

The protein resides in the cytoplasm. The enzyme catalyses D-erythrose 4-phosphate + NAD(+) + H2O = 4-phospho-D-erythronate + NADH + 2 H(+). It functions in the pathway cofactor biosynthesis; pyridoxine 5'-phosphate biosynthesis; pyridoxine 5'-phosphate from D-erythrose 4-phosphate: step 1/5. Its function is as follows. Catalyzes the NAD-dependent conversion of D-erythrose 4-phosphate to 4-phosphoerythronate. In Salmonella schwarzengrund (strain CVM19633), this protein is D-erythrose-4-phosphate dehydrogenase.